The chain runs to 578 residues: DNA mismatch repair protein MutL (578 aa).

It belongs to the DNA mismatch repair MutL/HexB family.

This protein is involved in the repair of mismatches in DNA. It is required for dam-dependent methyl-directed DNA mismatch repair. May act as a 'molecular matchmaker', a protein that promotes the formation of a stable complex between two or more DNA-binding proteins in an ATP-dependent manner without itself being part of a final effector complex. In Carboxydothermus hydrogenoformans (strain ATCC BAA-161 / DSM 6008 / Z-2901), this protein is DNA mismatch repair protein MutL.